We begin with the raw amino-acid sequence, 482 residues long: Histone deacetylase 1 (482 aa).

The segment at 9–321 (RKVCYYYDGD…WTYETAVALD (313 aa)) is histone deacetylase. 1D-myo-inositol 1,4,5,6-tetrakisphosphate-binding residues include G27 and K31. N6-acetyllysine; alternate is present on K74. Residue K74 forms a Glycyl lysine isopeptide (Lys-Gly) (interchain with G-Cter in SUMO2); alternate linkage. H141 is a catalytic residue. Residues D176 and H178 each coordinate Zn(2+). Residue K220 is modified to N6-acetyllysine. The residue at position 261 (C261) is an S-nitrosocysteine. D264 contacts Zn(2+). R270 serves as a coordination point for 1D-myo-inositol 1,4,5,6-tetrakisphosphate. C273 is subject to S-nitrosocysteine. Positions 390–400 (PEESGDEDEDD) are enriched in acidic residues. The disordered stretch occupies residues 390 to 482 (PEESGDEDED…KGVKEEVKLA (93 aa)). Residues S393, S406, and S409 each carry the phosphoserine modification. Positions 401–416 (PDKRISICSSDKRIAC) are enriched in basic and acidic residues. A compositionally biased stretch (acidic residues) spans 417-427 (EEEFSDSEEEG). A phosphoserine; by CK2 mark is found at S421 and S423. K432 bears the N6-methylated lysine; by EHMT2 mark. Residue K438 forms a Glycyl lysine isopeptide (Lys-Gly) (interchain with G-Cter in SUMO2) linkage. Residues 443-482 (VKTEDEKEKDPEEKKEVTEEEKTKEEKPEAKGVKEEVKLA) show a composition bias toward basic and acidic residues. A Glycyl lysine isopeptide (Lys-Gly) (interchain with G-Cter in SUMO2); alternate cross-link involves residue K444. K444 participates in a covalent cross-link: Glycyl lysine isopeptide (Lys-Gly) (interchain with G-Cter in SUMO); alternate. Glycyl lysine isopeptide (Lys-Gly) (interchain with G-Cter in SUMO2) cross-links involve residues K456, K457, and K473. K476 is covalently cross-linked (Glycyl lysine isopeptide (Lys-Gly) (interchain with G-Cter in SUMO2); alternate). A Glycyl lysine isopeptide (Lys-Gly) (interchain with G-Cter in SUMO); alternate cross-link involves residue K476. K480 is covalently cross-linked (Glycyl lysine isopeptide (Lys-Gly) (interchain with G-Cter in SUMO2)).

It belongs to the histone deacetylase family. HD type 1 subfamily. In terms of assembly, part of the core histone deacetylase (HDAC) complex composed of HDAC1, HDAC2, RBBP4 and RBBP7, the core complex associates with SIN3, SAP18 and SAP30 to form the SIN3 HDAC complex. Component of the nucleosome remodeling and deacetylase (NuRD) repressor complex, composed of core proteins MTA1, MTA2, MTA3, RBBP4, RBBP7, HDAC1, HDAC2, MBD2, MBD3, and peripherally associated proteins CDK2AP1, CDK2AP2, GATAD2A, GATAD2B, CHD3, CHD4 and CHD5. The exact stoichiometry of the NuRD complex is unknown, and some subunits such as MBD2 and MBD3, GATAD2A and GATAD2B, and CHD3, CHD4 and CHD5 define mutually exclusive NuRD complexes. Component of a BHC histone deacetylase complex that contains HDAC1, HDAC2, HMG20B/BRAF35, KDM1A, RCOR1/CoREST and PHF21A/BHC80. The BHC complex may also contain ZMYM2, ZNF217, ZMYM3, GSE1 and GTF2I. Component of a mSin3A corepressor complex that contains SIN3A, SAP130, SUDS3/SAP45, ARID4B/SAP180, HDAC1 and HDAC2. Component of the SIN3B complex, which includes SIN3B, HDAC1, PHF12 and MORF4L1. Found in a trimeric complex with APBB1 and TSHZ3; the interaction between HDAC1 and APBB1 is mediated by TSHZ3. Forms a complex comprising APPL1, RUVBL2, APPL2, CTNNB1 and HDAC2. Component of a RCOR/GFI/KDM1A/HDAC complex. Part of a complex composed of TRIM28, HDAC1, HDAC2 and EHMT2. Part of a complex containing at least CDYL, MIER1, MIER2, HDAC1 and HDAC2. The large PER complex involved in the histone deacetylation is composed of at least HDAC1, PER2, SFPQ and SIN3A. Associates with the 9-1-1 complex; interacts with HUS1. Found in a complex with DNMT3A and HDAC7. Found in a complex with YY1, SIN3A and GON4L. Identified in a histone deacetylase complex that contains DNTTIP1, HDAC1 and MIDEAS; this complex assembles into a tetramer that contains four copies of each protein chain. Found in a complex composed of at least SINHCAF, SIN3A, HDAC1, SAP30, RBBP4, OGT and TET1. Interacts with GFI1; the interaction is direct. Interacts directly with GFI1B. Interacts with TSHZ3 (via N-terminus); the interaction is direct. Interacts with APEX1; the interaction is not dependent on the acetylated status of APEX1. Interacts with BANP. Interacts with BAZ2A/TIP5. Interacts with BCL6. Interacts with BCOR. Interacts with BHLHE40/DEC1. Interacts with BRCC3; this interaction is enhanced in the presence of PWWP2B. Interacts with BRMS1. Interacts with BRMS1L. Interacts with C10orf90/FATS (via its N-terminal); the interaction prevents binding of HDAC1 to CDKN1A/p21 and facilitates the acetylation and stabilization of CDKN1A/p21. Interacts with CBFA2T3. Interacts with CCAR2. Interacts with CDK2AP1. Interacts with CHD3. Interacts with CHD4. Interacts with CHFR. Interacts with CIART. Interacts with CDKN1A/p21. Interacts with CDK5 complexed to CDK5R1 (p25). Interacts with CRY1. Interacts with DAXX. Interacts with DDIT3/CHOP. Interacts with DDX5. Interacts with DHX36; this interaction occurs in a RNA-dependent manner. Interacts with DNMT1. Interacts with DNTTIP1. Interacts with E4F1. Interacts with EP300. Interacts with ERCC6. Interacts with GATAD2A. Interacts with HCFC1. Interacts with HDAC9. Interacts with HUS1. Interacts with INSM1. Interacts with KDM4A. Interacts with KDM5A; this interaction impairs histone deacetylation. Interacts with KDM5B. Interacts with KLF1. Interacts with MBD3L2. Interacts with MIER1. Interacts with NFE4. Interacts with NR4A2/NURR1. Interacts with NR1D2 (via C-terminus). Interacts with NRIP1. Interacts with NSD2. Interacts with PACS2. Interacts with PHB2. Interacts with PPHLN1. Interacts with PRDM6. Interacts with PRDM16. Interacts with PWWP2A in a MTA1-dependent manner. Interacts with PWWP2B. Interacts with RB1. Interacts with RERE. Interacts with SANBR (via the BTB domain). Interacts with SAMSN1. Interacts with SAP30L. Interacts with SETDB1. Interacts with SIN3A. Interacts with SMAD3. Interacts with SMAD4; positively regulated by ZBTB7A. Interacts with SMARCAD1. Interacts with SMARCA4/BRG1. Interacts with SMYD2. Interacts with SMYD4 (via MYND-type zinc finger). Interacts with SP1; the interaction deacetylates SP1 and regulates its transcriptional activity. Interacts with SP3; the interaction deacetylates SP3 and regulates its transcriptional activity. In vitro, C(18) ceramides increase this interaction and the subsequent SP3 deacetylation and SP3-mediated repression of the TERT promoter. Interacts with SPEN/MINT. Interacts with SPHK2. Interacts with SUV39H1. Interacts with TGIF. Interacts with TGIF2. Interacts with TRAF6. Interacts with TRIM28; the interaction recruits HDAC1 to E2F1 and inhibits its acetylation. Interacts with TSC22D3 isoform 1; this interaction affects HDAC1 activity on MYOG promoter and thus inhibits MYOD1 transcriptional activity. Interacts with UHRF1. Interacts with UHRF2. Interacts with ZBTB7A. Interacts with ZMYND8. Interacts with ZMYND15. Interacts with ZNF431. Interacts with ZNF516; this interaction is enhanced in the presence of PWWP2B. Interacts with ZNF541. Interacts with ZNF638. Interacts with ZNHIT1. Interacts with the non-histone region of MACROH2A1. Identified in a complex with HDAC2, KCTD19, DNTTIP1 and ZNF541. Interacts with VRK1. As to quaternary structure, (Microbial infection) Interacts with SV40 large T antigen. The cofactor is Zn(2+). Sumoylated on Lys-444 and Lys-476; which promotes enzymatic activity. Desumoylated by SENP1. Post-translationally, phosphorylation on Ser-421 and Ser-423 promotes enzymatic activity and interactions with NuRD and SIN3 complexes. Phosphorylated by CDK5. In terms of processing, ubiquitinated by CHFR, leading to its degradation by the proteasome. Ubiquitinated by KCTD11, leading to proteasomal degradation. Ubiquitous, with higher levels in heart, pancreas and testis, and lower levels in kidney and brain.

The protein localises to the nucleus. It catalyses the reaction N(6)-acetyl-L-lysyl-[histone] + H2O = L-lysyl-[histone] + acetate. The enzyme catalyses N(6)-acetyl-L-lysyl-[protein] + H2O = L-lysyl-[protein] + acetate. The catalysed reaction is N(6)-(2E)-butenoyl-L-lysyl-[protein] + H2O = (2E)-2-butenoate + L-lysyl-[protein]. It carries out the reaction N(6)-[(S)-lactoyl]-L-lysyl-[protein] + H2O = (S)-lactate + L-lysyl-[protein]. Its activity is regulated as follows. Inositol tetraphosphate (1D-myo-inositol 1,4,5,6-tetrakisphosphate) may act as an intermolecular glue between HDAC1 and N-Cor repressor complex components. Histone deacetylase that catalyzes the deacetylation of lysine residues on the N-terminal part of the core histones (H2A, H2B, H3 and H4). Histone deacetylation gives a tag for epigenetic repression and plays an important role in transcriptional regulation, cell cycle progression and developmental events. Histone deacetylases act via the formation of large multiprotein complexes. Acts as a component of the histone deacetylase NuRD complex which participates in the remodeling of chromatin. As part of the SIN3B complex is recruited downstream of the constitutively active genes transcriptional start sites through interaction with histones and mitigates histone acetylation and RNA polymerase II progression within transcribed regions contributing to the regulation of transcription. Also functions as a deacetylase for non-histone targets, such as NR1D2, RELA, SP1, SP3, STAT3 and TSHZ3. Deacetylates SP proteins, SP1 and SP3, and regulates their function. Component of the BRG1-RB1-HDAC1 complex, which negatively regulates the CREST-mediated transcription in resting neurons. Upon calcium stimulation, HDAC1 is released from the complex and CREBBP is recruited, which facilitates transcriptional activation. Deacetylates TSHZ3 and regulates its transcriptional repressor activity. Deacetylates 'Lys-310' in RELA and thereby inhibits the transcriptional activity of NF-kappa-B. Deacetylates NR1D2 and abrogates the effect of KAT5-mediated relieving of NR1D2 transcription repression activity. Component of a RCOR/GFI/KDM1A/HDAC complex that suppresses, via histone deacetylase (HDAC) recruitment, a number of genes implicated in multilineage blood cell development. Involved in CIART-mediated transcriptional repression of the circadian transcriptional activator: CLOCK-BMAL1 heterodimer. Required for the transcriptional repression of circadian target genes, such as PER1, mediated by the large PER complex or CRY1 through histone deacetylation. In addition to protein deacetylase activity, also has protein-lysine deacylase activity: acts as a protein decrotonylase and delactylase by mediating decrotonylation ((2E)-butenoyl) and delactylation (lactoyl) of histones, respectively. This is Histone deacetylase 1 from Homo sapiens (Human).